The following is a 130-amino-acid chain: Small ribosomal subunit protein uS11c (130 aa).

It belongs to the universal ribosomal protein uS11 family. As to quaternary structure, part of the 30S ribosomal subunit.

It is found in the plastid. The protein resides in the chloroplast. This chain is Small ribosomal subunit protein uS11c, found in Oedogonium cardiacum (Filamentous green alga).